The sequence spans 353 residues: Pupal cuticle protein PCP52 (353 aa).

Residues 1–15 form the signal peptide; it reads MRVLILSAFIACATA. The disordered stretch occupies residues 166-195; that stretch reads AEAPEGNKDEGNKDSVQVESSATESESDKA. Residues 179–189 show a composition bias toward polar residues; that stretch reads DSVQVESSATE.

Component of the cuticle of the pupa of Galleria mellonella. The chain is Pupal cuticle protein PCP52 (PCP52) from Galleria mellonella (Greater wax moth).